The chain runs to 452 residues: Protein FAM81B (452 aa).

Composition is skewed to polar residues over residues Met-1–Ser-11 and Ile-38–Ala-55. The disordered stretch occupies residues Met-1–Ser-85. Coiled-coil stretches lie at residues Ile-164–Ala-192 and Leu-329–Val-452.

It belongs to the FAM81 family.

This is Protein FAM81B (FAM81B) from Homo sapiens (Human).